The primary structure comprises 101 residues: Small ribosomal subunit protein uS14 (101 aa).

This sequence belongs to the universal ribosomal protein uS14 family. As to quaternary structure, part of the 30S ribosomal subunit. Contacts proteins S3 and S10.

Its function is as follows. Binds 16S rRNA, required for the assembly of 30S particles and may also be responsible for determining the conformation of the 16S rRNA at the A site. The protein is Small ribosomal subunit protein uS14 of Synechococcus sp. (strain JA-3-3Ab) (Cyanobacteria bacterium Yellowstone A-Prime).